A 300-amino-acid polypeptide reads, in one-letter code: Iron-dependent extradiol dioxygenase (300 aa).

2 consecutive VOC domains span residues 5-120 and 142-270; these read SLGY…VFHG and GMGH…FGCE. A Fe cation-binding site is contributed by His-145. 4 residues coordinate substrate: His-200, His-215, Asp-250, and Tyr-256. Residue His-215 coordinates Fe cation. Residue Glu-266 participates in Fe cation binding.

It belongs to the extradiol ring-cleavage dioxygenase family. Homodimer, but may form a homooctamer. Requires Fe(2+) as cofactor.

It carries out the reaction 3,4-dihydroxy-9,10-secoandrosta-1,3,5(10)-triene-9,17-dione + O2 = (1E,2Z)-3-hydroxy-5,9,17-trioxo-4,5:9,10-disecoandrosta-1(10),2-dien-4-oate + H(+). The protein operates within steroid metabolism; cholesterol metabolism. Functionally, catalyzes the meta-cleavage of 3,4-dihydroxy-9,10-seconandrost-1,3,5(10)-triene-9,17-dione (3,4-DHSA) to produce 4,5-9,10-diseco-3-hydroxy-5,9,17-trioxoandrosta-1(10),2-diene-4-oic acid (4,9-DSHA). This Mycobacterium tuberculosis (strain CDC 1551 / Oshkosh) protein is Iron-dependent extradiol dioxygenase (hsaC).